The primary structure comprises 122 residues: Basic phospholipase A2 Ts-G6D49 (122 aa).

Intrachain disulfides connect cysteine 26–cysteine 115, cysteine 28–cysteine 44, cysteine 43–cysteine 95, cysteine 49–cysteine 122, cysteine 50–cysteine 88, cysteine 57–cysteine 81, and cysteine 75–cysteine 86. Residues tyrosine 27, glycine 29, and glycine 31 each coordinate Ca(2+). The active site involves histidine 47. A Ca(2+)-binding site is contributed by aspartate 48. Aspartate 89 is a catalytic residue.

Ca(2+) serves as cofactor. As to expression, expressed by the venom gland.

The protein localises to the secreted. It catalyses the reaction a 1,2-diacyl-sn-glycero-3-phosphocholine + H2O = a 1-acyl-sn-glycero-3-phosphocholine + a fatty acid + H(+). In terms of biological role, snake venom phospholipase A2 that induces fast and sustaining local edema a few hours after injection (5-10 ug) in the hind paw, and prolongs the coagulation time of human plasma. Exhibits moderate hydrolytic activities and prefers the zwitterionic micelles (dPPC with Triton X-100) to the anionic micelles (dPPC with deoxycholate). PLA2 catalyzes the calcium-dependent hydrolysis of the 2-acyl groups in 3-sn-phosphoglycerides. This Trimeresurus stejnegeri (Chinese green tree viper) protein is Basic phospholipase A2 Ts-G6D49.